The primary structure comprises 271 residues: Shikimate dehydrogenase (NADP(+)) (271 aa).

Shikimate-binding positions include 14–16 (SLS) and threonine 61. The Proton acceptor role is filled by lysine 65. Positions 86 and 101 each coordinate shikimate. Residues 125–129 (GAGGA) and isoleucine 212 contribute to the NADP(+) site. Tyrosine 214 is a binding site for shikimate. Residue glycine 235 participates in NADP(+) binding.

Belongs to the shikimate dehydrogenase family. In terms of assembly, homodimer.

The enzyme catalyses shikimate + NADP(+) = 3-dehydroshikimate + NADPH + H(+). The protein operates within metabolic intermediate biosynthesis; chorismate biosynthesis; chorismate from D-erythrose 4-phosphate and phosphoenolpyruvate: step 4/7. In terms of biological role, involved in the biosynthesis of the chorismate, which leads to the biosynthesis of aromatic amino acids. Catalyzes the reversible NADPH linked reduction of 3-dehydroshikimate (DHSA) to yield shikimate (SA). The sequence is that of Shikimate dehydrogenase (NADP(+)) from Clostridium perfringens (strain ATCC 13124 / DSM 756 / JCM 1290 / NCIMB 6125 / NCTC 8237 / Type A).